A 425-amino-acid chain; its full sequence is Enolase (425 aa).

Gln163 serves as a coordination point for (2R)-2-phosphoglycerate. Glu205 serves as the catalytic Proton donor. 3 residues coordinate Mg(2+): Asp242, Glu286, and Asp313. 4 residues coordinate (2R)-2-phosphoglycerate: Lys338, Arg367, Ser368, and Lys389. The active-site Proton acceptor is Lys338.

This sequence belongs to the enolase family. Mg(2+) serves as cofactor.

The protein localises to the cytoplasm. It is found in the secreted. The protein resides in the cell surface. The enzyme catalyses (2R)-2-phosphoglycerate = phosphoenolpyruvate + H2O. The protein operates within carbohydrate degradation; glycolysis; pyruvate from D-glyceraldehyde 3-phosphate: step 4/5. Functionally, catalyzes the reversible conversion of 2-phosphoglycerate (2-PG) into phosphoenolpyruvate (PEP). It is essential for the degradation of carbohydrates via glycolysis. This Helicobacter hepaticus (strain ATCC 51449 / 3B1) protein is Enolase.